Consider the following 351-residue polypeptide: Uroporphyrinogen decarboxylase (351 aa).

Residues 26–30 (RQAGR), Asp76, Tyr153, Ser208, and His323 each bind substrate.

Belongs to the uroporphyrinogen decarboxylase family. Homodimer.

The protein resides in the cytoplasm. It catalyses the reaction uroporphyrinogen III + 4 H(+) = coproporphyrinogen III + 4 CO2. Its pathway is porphyrin-containing compound metabolism; protoporphyrin-IX biosynthesis; coproporphyrinogen-III from 5-aminolevulinate: step 4/4. In terms of biological role, catalyzes the decarboxylation of four acetate groups of uroporphyrinogen-III to yield coproporphyrinogen-III. The chain is Uroporphyrinogen decarboxylase from Prochlorococcus marinus (strain MIT 9211).